The following is a 163-amino-acid chain: Shikimate kinase (163 aa).

Residue 10 to 15 (GVGKSS) coordinates ATP. S14 lines the Mg(2+) pocket. Substrate is bound by residues D28, R52, and G75. R116 lines the ATP pocket. R134 lines the substrate pocket. An ATP-binding site is contributed by R151.

It belongs to the shikimate kinase family. Monomer. It depends on Mg(2+) as a cofactor.

The protein resides in the cytoplasm. The catalysed reaction is shikimate + ATP = 3-phosphoshikimate + ADP + H(+). The protein operates within metabolic intermediate biosynthesis; chorismate biosynthesis; chorismate from D-erythrose 4-phosphate and phosphoenolpyruvate: step 5/7. In terms of biological role, catalyzes the specific phosphorylation of the 3-hydroxyl group of shikimic acid using ATP as a cosubstrate. The protein is Shikimate kinase of Streptococcus thermophilus (strain ATCC BAA-491 / LMD-9).